A 224-amino-acid chain; its full sequence is Urease accessory protein UreF (224 aa).

This sequence belongs to the UreF family. In terms of assembly, ureD, UreF and UreG form a complex that acts as a GTP-hydrolysis-dependent molecular chaperone, activating the urease apoprotein by helping to assemble the nickel containing metallocenter of UreC. The UreE protein probably delivers the nickel.

The protein resides in the cytoplasm. Required for maturation of urease via the functional incorporation of the urease nickel metallocenter. The sequence is that of Urease accessory protein UreF from Pseudomonas fluorescens (strain ATCC BAA-477 / NRRL B-23932 / Pf-5).